The following is a 524-amino-acid chain: Phosphoenolpyruvate carboxykinase (ATP) (524 aa).

The substrate site is built by Arg52, Tyr188, and Lys194. Residues Lys194, His213, and 229–237 (GLSGTGKTT) each bind ATP. The Mn(2+) site is built by Lys194 and His213. Position 250 (Asp250) interacts with Mn(2+). 3 residues coordinate ATP: Glu278, Arg314, and Thr439. A substrate-binding site is contributed by Arg314.

The protein belongs to the phosphoenolpyruvate carboxykinase (ATP) family. Mn(2+) serves as cofactor.

Its subcellular location is the cytoplasm. The catalysed reaction is oxaloacetate + ATP = phosphoenolpyruvate + ADP + CO2. It functions in the pathway carbohydrate biosynthesis; gluconeogenesis. Functionally, involved in the gluconeogenesis. Catalyzes the conversion of oxaloacetate (OAA) to phosphoenolpyruvate (PEP) through direct phosphoryl transfer between the nucleoside triphosphate and OAA. The chain is Phosphoenolpyruvate carboxykinase (ATP) from Campylobacter jejuni (strain RM1221).